A 222-amino-acid chain; its full sequence is Large ribosomal subunit protein uL1 (222 aa).

The protein belongs to the universal ribosomal protein uL1 family. Part of the 50S ribosomal subunit.

In terms of biological role, binds directly to 23S rRNA. Probably involved in E site tRNA release. Its function is as follows. Protein L1 is also a translational repressor protein, it controls the translation of its operon by binding to its mRNA. This Pyrobaculum calidifontis (strain DSM 21063 / JCM 11548 / VA1) protein is Large ribosomal subunit protein uL1.